The sequence spans 634 residues: Leucine--tRNA ligase subunit alpha (634 aa).

The 'HIGH' region signature appears at 43-51 (PSGRIHMGH).

It belongs to the class-I aminoacyl-tRNA synthetase family. Seems to consist of an alpha chain and a beta chain.

The protein resides in the cytoplasm. The catalysed reaction is tRNA(Leu) + L-leucine + ATP = L-leucyl-tRNA(Leu) + AMP + diphosphate. This Aquifex aeolicus (strain VF5) protein is Leucine--tRNA ligase subunit alpha (leuS).